Here is a 389-residue protein sequence, read N- to C-terminus: Lipid-A-disaccharide synthase (389 aa).

Belongs to the LpxB family.

The catalysed reaction is a lipid X + a UDP-2-N,3-O-bis[(3R)-3-hydroxyacyl]-alpha-D-glucosamine = a lipid A disaccharide + UDP + H(+). Its pathway is bacterial outer membrane biogenesis; LPS lipid A biosynthesis. Condensation of UDP-2,3-diacylglucosamine and 2,3-diacylglucosamine-1-phosphate to form lipid A disaccharide, a precursor of lipid A, a phosphorylated glycolipid that anchors the lipopolysaccharide to the outer membrane of the cell. The sequence is that of Lipid-A-disaccharide synthase from Paraburkholderia xenovorans (strain LB400).